We begin with the raw amino-acid sequence, 432 residues long: Alpha-enolase (432 aa).

Residue Ser-40 participates in Mg(2+) binding. Substrate contacts are provided by His-158 and Glu-167. Glu-210 (proton donor) is an active-site residue. Mg(2+)-binding residues include Asp-245, Glu-293, and Asp-318. The substrate site is built by Glu-293 and Asp-318. Lys-343 serves as the catalytic Proton acceptor. Residues Ser-370–Ser-373 and Lys-394 each bind substrate.

This sequence belongs to the enolase family. Dimer. Mg(2+) is required as a cofactor.

The protein localises to the cytoplasm. It carries out the reaction (2R)-2-phosphoglycerate = phosphoenolpyruvate + H2O. Its pathway is carbohydrate degradation; glycolysis; pyruvate from D-glyceraldehyde 3-phosphate: step 4/5. Functionally, multifunctional enzyme that, as well as its role in glycolysis, plays a part in various processes such as growth control, hypoxia tolerance and allergic responses. The chain is Alpha-enolase from Thunnus albacares (Yellowfin tuna).